Here is a 203-residue protein sequence, read N- to C-terminus: FMN-dependent NADH:quinone oxidoreductase 1 (203 aa).

FMN is bound by residues Ser-9, 15 to 17 (SAS), 95 to 98 (MYNF), and 139 to 142 (TAGG).

It belongs to the azoreductase type 1 family. Homodimer. Requires FMN as cofactor.

The catalysed reaction is 2 a quinone + NADH + H(+) = 2 a 1,4-benzosemiquinone + NAD(+). It carries out the reaction N,N-dimethyl-1,4-phenylenediamine + anthranilate + 2 NAD(+) = 2-(4-dimethylaminophenyl)diazenylbenzoate + 2 NADH + 2 H(+). Functionally, quinone reductase that provides resistance to thiol-specific stress caused by electrophilic quinones. Its function is as follows. Also exhibits azoreductase activity. Catalyzes the reductive cleavage of the azo bond in aromatic azo compounds to the corresponding amines. This Pseudomonas putida (strain ATCC 47054 / DSM 6125 / CFBP 8728 / NCIMB 11950 / KT2440) protein is FMN-dependent NADH:quinone oxidoreductase 1.